The chain runs to 181 residues: MSGSAVSKRYASALFDIANESAQLNQVEEELIVVKQVFQNEKALNDVLNHPKVPAAKKKELIQNAFGSLSQSVLNTIFLLIDRHRAAIVPELTDEFIKLANVARQTEDAIVYSVKPLTDAEMLPLSQVFAKKAGVASLRIRNEVQTDLIGGIKVRIGNRIYDGSVSGKLQRIERQLAGENR.

The protein belongs to the ATPase delta chain family. In terms of assembly, F-type ATPases have 2 components, F(1) - the catalytic core - and F(0) - the membrane proton channel. F(1) has five subunits: alpha(3), beta(3), gamma(1), delta(1), epsilon(1). F(0) has three main subunits: a(1), b(2) and c(10-14). The alpha and beta chains form an alternating ring which encloses part of the gamma chain. F(1) is attached to F(0) by a central stalk formed by the gamma and epsilon chains, while a peripheral stalk is formed by the delta and b chains. The F(1)F(0) complex interacts with SpoIIIJ and YqjG; YqgA is found in the same complex. Interacts with FloT.

Its subcellular location is the cell membrane. It localises to the membrane raft. F(1)F(0) ATP synthase produces ATP from ADP in the presence of a proton or sodium gradient. F-type ATPases consist of two structural domains, F(1) containing the extramembraneous catalytic core and F(0) containing the membrane proton channel, linked together by a central stalk and a peripheral stalk. During catalysis, ATP synthesis in the catalytic domain of F(1) is coupled via a rotary mechanism of the central stalk subunits to proton translocation. Functionally, this protein is part of the stalk that links CF(0) to CF(1). It either transmits conformational changes from CF(0) to CF(1) or is implicated in proton conduction. This is ATP synthase subunit delta from Bacillus subtilis (strain 168).